The sequence spans 251 residues: tRNA (guanine-N(7)-)-methyltransferase (251 aa).

Residues 1 to 43 (MQPNEQPGTGPADTTLEQQDTAAAEVGHPRRIRSFVRRAGRTS) are disordered. Positions 29 to 40 (PRRIRSFVRRAG) are enriched in basic residues. Residues glutamate 82, glutamate 107, aspartate 134, and aspartate 157 each contribute to the S-adenosyl-L-methionine site. The active site involves aspartate 157. Residue lysine 161 participates in substrate binding. An interaction with RNA region spans residues 163-168 (RHNKRR). Residues aspartate 193 and 228 to 231 (TKFE) contribute to the substrate site.

This sequence belongs to the class I-like SAM-binding methyltransferase superfamily. TrmB family.

It catalyses the reaction guanosine(46) in tRNA + S-adenosyl-L-methionine = N(7)-methylguanosine(46) in tRNA + S-adenosyl-L-homocysteine. It functions in the pathway tRNA modification; N(7)-methylguanine-tRNA biosynthesis. In terms of biological role, catalyzes the formation of N(7)-methylguanine at position 46 (m7G46) in tRNA. This chain is tRNA (guanine-N(7)-)-methyltransferase, found in Ralstonia nicotianae (strain ATCC BAA-1114 / GMI1000) (Ralstonia solanacearum).